The chain runs to 88 residues: Small ribosomal subunit protein bS20 (88 aa).

Residues 1-36 (MANTSSAKKATRKIARRTAVNKSRRTQMRGSVRTVE) form a disordered region.

It belongs to the bacterial ribosomal protein bS20 family.

In terms of biological role, binds directly to 16S ribosomal RNA. This chain is Small ribosomal subunit protein bS20, found in Rhodopseudomonas palustris (strain HaA2).